The sequence spans 371 residues: Protease PrtS (371 aa).

H169 lines the Zn(2+) pocket. The active site involves E170. The Zn(2+) site is built by H173 and E193. The active-site Proton donor is the H273. The interval 352 to 371 is disordered; the sequence is KEEDKDKGKDEGKDKAETKV.

The protein belongs to the peptidase M4 family. It depends on Zn(2+) as a cofactor.

It is found in the secreted. Its activity is regulated as follows. Inhibited by 8 mM 1,10-phenanthroline, but not by EDTA or PMSF. Metalloprotease involved in the inhibition of insect antibacterial peptides. Reduces the antibacterial activity of G.mellonella hemolymph by 50%. Reduces the antibacterial activity of cecropin A by 80% and completely inhibits cecropin B. In Photorhabdus sp. (strain Az29), this protein is Protease PrtS.